The sequence spans 511 residues: Bifunctional purine biosynthesis protein PurH (511 aa).

The MGS-like domain maps to 1-144 (MKTALLSVSD…KNFASVLPVV (144 aa)).

Belongs to the PurH family.

The enzyme catalyses (6R)-10-formyltetrahydrofolate + 5-amino-1-(5-phospho-beta-D-ribosyl)imidazole-4-carboxamide = 5-formamido-1-(5-phospho-D-ribosyl)imidazole-4-carboxamide + (6S)-5,6,7,8-tetrahydrofolate. It carries out the reaction IMP + H2O = 5-formamido-1-(5-phospho-D-ribosyl)imidazole-4-carboxamide. It participates in purine metabolism; IMP biosynthesis via de novo pathway; 5-formamido-1-(5-phospho-D-ribosyl)imidazole-4-carboxamide from 5-amino-1-(5-phospho-D-ribosyl)imidazole-4-carboxamide (10-formyl THF route): step 1/1. Its pathway is purine metabolism; IMP biosynthesis via de novo pathway; IMP from 5-formamido-1-(5-phospho-D-ribosyl)imidazole-4-carboxamide: step 1/1. This is Bifunctional purine biosynthesis protein PurH from Pediococcus pentosaceus (strain ATCC 25745 / CCUG 21536 / LMG 10740 / 183-1w).